The chain runs to 396 residues: MSESVHTNTSLWSKGMKAVIVAQFLSAFGDNALLFATLALLKAQFYPEWSQPILQMVFVGAYILLAPFVGQVADSFAKGRVMMFANGLKLLGAASICFGINPFLGYTLVGVGAAAYSPAKYGILGELTTGSKLVKANGLMEASAIAAILLGSVAGGVLADWHVLVALAACALAYGGAVVANIYIPKLAARPGQSWNLINMTRSFLNACTSLWCNGETRFSLVGASLFWGAGVTLRFLLVLWVPVALGITDNATPTYLNAMVAIGIVVGAGAAAKLVTLETVSRCMPAGILIGVVVLIFSLQHELLPAYALLMLIGVLGGFFVVPLNALLQERGKKSVGAGNAIAVQNLGENSAMLLMLGIYSLAVMVGIPVVPIGIGFGALFALAITALWIWQRRH.

Residues 1 to 17 (MSESVHTNTSLWSKGMK) lie on the Periplasmic side of the membrane. Residues 18 to 38 (AVIVAQFLSAFGDNALLFATL) form a helical membrane-spanning segment. Residues 39–52 (ALLKAQFYPEWSQP) lie on the Cytoplasmic side of the membrane. A helical membrane pass occupies residues 53-73 (ILQMVFVGAYILLAPFVGQVA). Over 74-90 (DSFAKGRVMMFANGLKL) the chain is Periplasmic. Residues 91–111 (LGAASICFGINPFLGYTLVGV) form a helical membrane-spanning segment. The Cytoplasmic portion of the chain corresponds to 112–144 (GAAAYSPAKYGILGELTTGSKLVKANGLMEASA). A helical membrane pass occupies residues 145–165 (IAAILLGSVAGGVLADWHVLV). A topological domain (periplasmic) is located at residue Ala-166. The chain crosses the membrane as a helical span at residues 167–187 (LAACALAYGGAVVANIYIPKL). Topologically, residues 188–225 (AARPGQSWNLINMTRSFLNACTSLWCNGETRFSLVGAS) are cytoplasmic. The chain crosses the membrane as a helical span at residues 226–246 (LFWGAGVTLRFLLVLWVPVAL). Topologically, residues 247 to 255 (GITDNATPT) are periplasmic. The helical transmembrane segment at 256 to 276 (YLNAMVAIGIVVGAGAAAKLV) threads the bilayer. Topologically, residues 277 to 279 (TLE) are cytoplasmic. Residues 280–300 (TVSRCMPAGILIGVVVLIFSL) form a helical membrane-spanning segment. Over 301–303 (QHE) the chain is Periplasmic. Residues 304–324 (LLPAYALLMLIGVLGGFFVVP) form a helical membrane-spanning segment. Topologically, residues 325–342 (LNALLQERGKKSVGAGNA) are cytoplasmic. The chain crosses the membrane as a helical span at residues 343–363 (IAVQNLGENSAMLLMLGIYSL). Over 364–365 (AV) the chain is Periplasmic. A helical transmembrane segment spans residues 366–386 (MVGIPVVPIGIGFGALFALAI). The Cytoplasmic portion of the chain corresponds to 387–396 (TALWIWQRRH).

It belongs to the major facilitator superfamily. LplT (TC 2.A.1.42) family.

It is found in the cell inner membrane. Functionally, catalyzes the facilitated diffusion of 2-acyl-glycero-3-phosphoethanolamine (2-acyl-GPE) into the cell. The protein is Lysophospholipid transporter LplT of Shigella flexneri serotype 5b (strain 8401).